A 132-amino-acid chain; its full sequence is Pre-histone-like nucleoprotein (132 aa).

The propeptide occupies A2 to G23. The Nuclear localization signal signature appears at R124–K132.

This sequence belongs to the adenoviridae histone-like nucleoprotein family. Interacts with the core-capsid bridging protein; this interaction bridges the virus core to the capsid. Interacts with host NPM1; this interaction might play a role in placing the pre-histone-like nucleoprotein on the viral DNA or regulating viral gene expression. Interacts with host HMGB1; this interaction inhibits host immune response. In terms of processing, cleaved near the N-terminus by the viral protease during virion maturation to form the mature protein.

It is found in the virion. It localises to the host nucleus. Its subcellular location is the host nucleolus. Functionally, plays a role in the inhibition of host immune response within the nucleus. Interacts with cellular nucleosomes and immobilizes the host immune danger signal HMGB1 on chromatin. In turn, prevents HMGB1 release out of the cell and thus decreases inflammation. Also plays a role in the wrapping and condensation of the viral DNA. May also promote viral genome import into the nucleus. This Canine adenovirus serotype 1 (strain RI261) (CAdV-1) protein is Pre-histone-like nucleoprotein.